The primary structure comprises 375 residues: Succinyl-diaminopimelate desuccinylase (375 aa).

Zn(2+) is bound at residue histidine 66. Aspartate 68 is an active-site residue. Aspartate 99 contributes to the Zn(2+) binding site. Glutamate 133 (proton acceptor) is an active-site residue. Glutamate 134, glutamate 162, and histidine 348 together coordinate Zn(2+).

The protein belongs to the peptidase M20A family. DapE subfamily. Homodimer. Zn(2+) serves as cofactor. Co(2+) is required as a cofactor.

The catalysed reaction is N-succinyl-(2S,6S)-2,6-diaminopimelate + H2O = (2S,6S)-2,6-diaminopimelate + succinate. Its pathway is amino-acid biosynthesis; L-lysine biosynthesis via DAP pathway; LL-2,6-diaminopimelate from (S)-tetrahydrodipicolinate (succinylase route): step 3/3. Catalyzes the hydrolysis of N-succinyl-L,L-diaminopimelic acid (SDAP), forming succinate and LL-2,6-diaminopimelate (DAP), an intermediate involved in the bacterial biosynthesis of lysine and meso-diaminopimelic acid, an essential component of bacterial cell walls. This is Succinyl-diaminopimelate desuccinylase from Photorhabdus laumondii subsp. laumondii (strain DSM 15139 / CIP 105565 / TT01) (Photorhabdus luminescens subsp. laumondii).